The chain runs to 253 residues: Beta-crystallin B1 (253 aa).

Over residues 1–18 (MSQPAAKASATAAVNPGP) the composition is skewed to low complexity. The disordered stretch occupies residues 1-53 (MSQPAAKASATAAVNPGPDGKGKAGPPPGPAPGSGPAPAPAPAPAQPAPAAKA). N-acetylserine is present on Ser-2. Residues 2-59 (SQPAAKASATAAVNPGPDGKGKAGPPPGPAPGSGPAPAPAPAPAQPAPAAKAELPPGS) are N-terminal arm. A compositionally biased stretch (pro residues) spans 25 to 47 (GPPPGPAPGSGPAPAPAPAPAQP). 2 Beta/gamma crystallin 'Greek key' domains span residues 60–99 (YKLVVFEQENFQGRRVEFSGECLNLGDRGFERVRSIIVTS) and 100–144 (GPWV…RPIK). Residues 145 to 149 (MDAQE) form a connecting peptide region. 2 Beta/gamma crystallin 'Greek key' domains span residues 150–191 (HKLC…RVSS) and 192–234 (GTWV…RRLR). Residues 236-253 (RQWHREGCFPVLAAEPPK) are C-terminal arm.

Belongs to the beta/gamma-crystallin family. As to quaternary structure, homo/heterodimer, or complexes of higher-order. The structure of beta-crystallin oligomers seems to be stabilized through interactions between the N-terminal arms. In terms of processing, specific cleavages in the N-terminal arm occur during lens maturation and give rise to truncated forms, leading to impaired oligomerization and protein insolubilization.

In terms of biological role, crystallins are the dominant structural components of the vertebrate eye lens. This chain is Beta-crystallin B1 (CRYBB1), found in Bos taurus (Bovine).